Reading from the N-terminus, the 376-residue chain is Carbamoyl phosphate synthase small chain (376 aa).

A nucleophile region spans residues 1 to 181 (MSKAVLVLED…VEPDGPPGVS (181 aa)). The CPSase stretch occupies residues 1 to 183 (MSKAVLVLED…PDGPPGVSRF (183 aa)). Ser46, Gly232, Gly234, Phe261, Gln264, Asn302, Gly304, and Phe305 together coordinate L-glutamine. One can recognise a Glutamine amidotransferase type-1 domain in the interval 184–376 (TVAALDLGIK…FVELMAGEGR (193 aa)). Active-site residues include His350 and Glu352.

Belongs to the CarA family. In terms of assembly, composed of two chains; the small (or glutamine) chain promotes the hydrolysis of glutamine to ammonia, which is used by the large (or ammonia) chain to synthesize carbamoyl phosphate. Tetramer of heterodimers (alpha,beta)4.

It carries out the reaction hydrogencarbonate + L-glutamine + 2 ATP + H2O = carbamoyl phosphate + L-glutamate + 2 ADP + phosphate + 2 H(+). It catalyses the reaction L-glutamine + H2O = L-glutamate + NH4(+). Its pathway is amino-acid biosynthesis; L-arginine biosynthesis; carbamoyl phosphate from bicarbonate: step 1/1. It functions in the pathway pyrimidine metabolism; UMP biosynthesis via de novo pathway; (S)-dihydroorotate from bicarbonate: step 1/3. In terms of biological role, small subunit of the glutamine-dependent carbamoyl phosphate synthetase (CPSase). CPSase catalyzes the formation of carbamoyl phosphate from the ammonia moiety of glutamine, carbonate, and phosphate donated by ATP, constituting the first step of 2 biosynthetic pathways, one leading to arginine and/or urea and the other to pyrimidine nucleotides. The small subunit (glutamine amidotransferase) binds and cleaves glutamine to supply the large subunit with the substrate ammonia. The polypeptide is Carbamoyl phosphate synthase small chain (Mycobacterium tuberculosis (strain CDC 1551 / Oshkosh)).